A 922-amino-acid chain; its full sequence is Putative ATP-dependent helicase/translocase YwqA (922 aa).

The region spanning 462–625 is the Helicase ATP-binding domain; sequence LFLRESGFGA…WSIFDFMNKG (164 aa). 475–482 is a binding site for ATP; sequence DDMGLGKT. The DEAQ box signature appears at 576 to 579; that stretch reads DEAQ. The Helicase C-terminal domain maps to 753 to 907; the sequence is KLLELMTAIR…QSENWITELS (155 aa).

The protein belongs to the SNF2/RAD54 helicase family. As to quaternary structure, interacts with the RNA polymerase core.

The protein is Putative ATP-dependent helicase/translocase YwqA (ywqA) of Bacillus subtilis (strain 168).